We begin with the raw amino-acid sequence, 443 residues long: ATP-dependent protease ATPase subunit HslU (443 aa).

ATP contacts are provided by residues Ile18, 60 to 65 (GVGKTE), Asp256, Glu321, and Arg393.

It belongs to the ClpX chaperone family. HslU subfamily. As to quaternary structure, a double ring-shaped homohexamer of HslV is capped on each side by a ring-shaped HslU homohexamer. The assembly of the HslU/HslV complex is dependent on binding of ATP.

The protein resides in the cytoplasm. In terms of biological role, ATPase subunit of a proteasome-like degradation complex; this subunit has chaperone activity. The binding of ATP and its subsequent hydrolysis by HslU are essential for unfolding of protein substrates subsequently hydrolyzed by HslV. HslU recognizes the N-terminal part of its protein substrates and unfolds these before they are guided to HslV for hydrolysis. In Escherichia coli O17:K52:H18 (strain UMN026 / ExPEC), this protein is ATP-dependent protease ATPase subunit HslU.